The sequence spans 475 residues: Aspartyl/glutamyl-tRNA(Asn/Gln) amidotransferase subunit B (475 aa).

The protein belongs to the GatB/GatE family. GatB subfamily. Heterotrimer of A, B and C subunits.

It carries out the reaction L-glutamyl-tRNA(Gln) + L-glutamine + ATP + H2O = L-glutaminyl-tRNA(Gln) + L-glutamate + ADP + phosphate + H(+). The catalysed reaction is L-aspartyl-tRNA(Asn) + L-glutamine + ATP + H2O = L-asparaginyl-tRNA(Asn) + L-glutamate + ADP + phosphate + 2 H(+). Functionally, allows the formation of correctly charged Asn-tRNA(Asn) or Gln-tRNA(Gln) through the transamidation of misacylated Asp-tRNA(Asn) or Glu-tRNA(Gln) in organisms which lack either or both of asparaginyl-tRNA or glutaminyl-tRNA synthetases. The reaction takes place in the presence of glutamine and ATP through an activated phospho-Asp-tRNA(Asn) or phospho-Glu-tRNA(Gln). This Staphylococcus aureus (strain bovine RF122 / ET3-1) protein is Aspartyl/glutamyl-tRNA(Asn/Gln) amidotransferase subunit B.